The sequence spans 377 residues: WAT1-related protein At5g13670 (377 aa).

Helical transmembrane passes span 9–29 (FIAI…AKLA), 38–58 (VLVA…ALIL), 64–84 (PKLT…EPVV), 99–119 (TFTS…ACVF), 136–156 (VGTM…GNVI), 187–207 (IMLV…AKIL), 214–234 (LSLT…MGLI), 251–271 (LLAS…IGWA), 279–299 (FVSA…TFVF), and 303–323 (VYVG…LVLW). EamA domains follow at residues 18–149 (LYAL…MLMT) and 194–322 (FSWS…YLVL).

It belongs to the drug/metabolite transporter (DMT) superfamily. Plant drug/metabolite exporter (P-DME) (TC 2.A.7.4) family.

The protein localises to the membrane. The sequence is that of WAT1-related protein At5g13670 from Arabidopsis thaliana (Mouse-ear cress).